The primary structure comprises 156 residues: Transcription elongation factor GreA (156 aa).

Positions Glu-2–Arg-27 form a coiled coil.

This sequence belongs to the GreA/GreB family.

Necessary for efficient RNA polymerase transcription elongation past template-encoded arresting sites. The arresting sites in DNA have the property of trapping a certain fraction of elongating RNA polymerases that pass through, resulting in locked ternary complexes. Cleavage of the nascent transcript by cleavage factors such as GreA or GreB allows the resumption of elongation from the new 3'terminus. GreA releases sequences of 2 to 3 nucleotides. The chain is Transcription elongation factor GreA from Lactococcus lactis subsp. cremoris (strain SK11).